A 666-amino-acid polypeptide reads, in one-letter code: DNA mismatch repair protein MutL (666 aa).

Belongs to the DNA mismatch repair MutL/HexB family.

Its function is as follows. This protein is involved in the repair of mismatches in DNA. It is required for dam-dependent methyl-directed DNA mismatch repair. May act as a 'molecular matchmaker', a protein that promotes the formation of a stable complex between two or more DNA-binding proteins in an ATP-dependent manner without itself being part of a final effector complex. This Clostridium botulinum (strain 657 / Type Ba4) protein is DNA mismatch repair protein MutL.